A 247-amino-acid polypeptide reads, in one-letter code: Synaptogyrin homolog 1 (247 aa).

The MARVEL domain maps to 21–175 (FFKKPTVLFR…AAFFAWRRYE (155 aa)). A run of 4 helical transmembrane segments spans residues 25-45 (PTVLFRCAALLFGLILWYSVS), 69-89 (CSFATAVGFFAVCGAIVLIVL), 105-125 (AVLADLVVSAIFTAIFLIGFF), and 151-171 (FGILSALLSFLAWGGAAFFAW). The tract at residues 206–247 (DSTGIGHVGAPPPQSSYQSGAAPQTMQQPPSNPYTQSEGYGY) is disordered. Polar residues predominate over residues 220-247 (SSYQSGAAPQTMQQPPSNPYTQSEGYGY).

The protein belongs to the synaptogyrin family. Expressed in a wide variety of neurons and is expressed weakly in the non-neuronal distal tip cells. A punctate pattern was observed in the ventral and dorsal nerve cords and the nerve ring. Weak expression is seen in neuronal cell bodies and commissures.

Its subcellular location is the membrane. This is Synaptogyrin homolog 1 (sng-1) from Caenorhabditis elegans.